Reading from the N-terminus, the 476-residue chain is Salicylate biosynthesis isochorismate synthase (476 aa).

The segment at 181 to 202 (RRRPSGPTAGAQGDASAQERRQ) is disordered.

The protein belongs to the isochorismate synthase family.

It carries out the reaction chorismate = isochorismate. The protein operates within siderophore biosynthesis; salicylate biosynthesis. Involved in the conversion of chorismate to salicylate. This chain is Salicylate biosynthesis isochorismate synthase (pchA), found in Pseudomonas aeruginosa (strain ATCC 15692 / DSM 22644 / CIP 104116 / JCM 14847 / LMG 12228 / 1C / PRS 101 / PAO1).